Reading from the N-terminus, the 99-residue chain is UPF0235 protein PM1313 (99 aa).

It belongs to the UPF0235 family.

This is UPF0235 protein PM1313 from Pasteurella multocida (strain Pm70).